An 83-amino-acid polypeptide reads, in one-letter code: Small ribosomal subunit protein eS21 (83 aa).

Residue Met1 is modified to N-acetylmethionine. Residue Lys41 forms a Glycyl lysine isopeptide (Lys-Gly) (interchain with G-Cter in SUMO2) linkage.

The protein belongs to the eukaryotic ribosomal protein eS21 family. Component of the 40S small ribosomal subunit.

Its subcellular location is the cytoplasm. It is found in the cytosol. The protein resides in the rough endoplasmic reticulum. In terms of biological role, component of the small ribosomal subunit. The ribosome is a large ribonucleoprotein complex responsible for the synthesis of proteins in the cell. In Oryctolagus cuniculus (Rabbit), this protein is Small ribosomal subunit protein eS21 (RPS21).